The primary structure comprises 331 residues: tRNA pseudouridine synthase B (331 aa).

Asp-51 acts as the Nucleophile in catalysis.

Belongs to the pseudouridine synthase TruB family. Type 1 subfamily.

The enzyme catalyses uridine(55) in tRNA = pseudouridine(55) in tRNA. Functionally, responsible for synthesis of pseudouridine from uracil-55 in the psi GC loop of transfer RNAs. This chain is tRNA pseudouridine synthase B, found in Verminephrobacter eiseniae (strain EF01-2).